The following is a 431-amino-acid chain: Adenylosuccinate synthetase (431 aa).

GTP-binding positions include 13–19 (GDEGKGK) and 41–43 (GHT). Aspartate 14 serves as the catalytic Proton acceptor. 2 residues coordinate Mg(2+): aspartate 14 and glycine 41. Residues 14-17 (DEGK), 39-42 (NAGH), threonine 130, arginine 144, glutamine 225, threonine 240, and arginine 304 each bind IMP. The Proton donor role is filled by histidine 42. 300–306 (ATTGRER) provides a ligand contact to substrate. Residues arginine 306, 332–334 (KLD), and 415–417 (STG) contribute to the GTP site.

Belongs to the adenylosuccinate synthetase family. As to quaternary structure, homodimer. Mg(2+) serves as cofactor.

It is found in the cytoplasm. The catalysed reaction is IMP + L-aspartate + GTP = N(6)-(1,2-dicarboxyethyl)-AMP + GDP + phosphate + 2 H(+). The protein operates within purine metabolism; AMP biosynthesis via de novo pathway; AMP from IMP: step 1/2. Functionally, plays an important role in the de novo pathway of purine nucleotide biosynthesis. Catalyzes the first committed step in the biosynthesis of AMP from IMP. This is Adenylosuccinate synthetase from Colwellia psychrerythraea (strain 34H / ATCC BAA-681) (Vibrio psychroerythus).